Consider the following 343-residue polypeptide: Envelope glycoprotein K (343 aa).

The N-terminal stretch at methionine 1–glutamine 31 is a signal peptide. Residues leucine 32 to tyrosine 118 lie on the Extracellular side of the membrane. N-linked (GlcNAc...) asparagine; by host glycosylation is found at asparagine 57 and asparagine 89. Residues leucine 119–cysteine 139 form a helical membrane-spanning segment. The Cytoplasmic portion of the chain corresponds to leucine 140 to serine 213. The helical transmembrane segment at alanine 214–valine 234 threads the bilayer. Residues glycine 235–tyrosine 251 lie on the Extracellular side of the membrane. A helical transmembrane segment spans residues leucine 252–isoleucine 272. Over tyrosine 273 to threonine 303 the chain is Cytoplasmic. A helical membrane pass occupies residues valine 304–isoleucine 324. Topologically, residues leucine 325–serine 343 are extracellular.

Belongs to the alphaherpesvirinae glycoprotein K family. As to quaternary structure, interacts (via UL20 interaction region) with protein UL20 homolog (via N-terminus); this interaction probably plays a role in the coordinate transport of protein UL20 homolog and gK to the trans-Golgi network (TGN), and is required for the cell surface expression of gK. N-glycosylated.

The protein localises to the host cell membrane. It localises to the host endosome membrane. The protein resides in the host Golgi apparatus membrane. Glycoprotein that probably modulates membrane fusion events during secondary envelopment of cytoplasmic capsids that bud into specific trans-Golgi network (TGN)-derived membranes. The chain is Envelope glycoprotein K (gK) from Equine herpesvirus 1 (strain Ab4p) (EHV-1).